The chain runs to 167 residues: MYKKYNSNVCIRNVLYVYLKYNTINKLSRYERMIYTKIKNQCEAIKYRYCNDFNSVTCILEYDENKYIDNVHKEVISILLSDSRPSIKLAAISLLSIIIDKLICRNIRIAKYIIDDIINIISEDGIYIILFLDEFDKYTDTRCRRRGLSMMIASIVTYYCLRYVLKI.

This is an uncharacterized protein from Sus scrofa (Pig).